The sequence spans 85 residues: Large ribosomal subunit protein bL27 (85 aa).

The tract at residues 1–20 (MAHKKAAGSTRNGRDSEAKR) is disordered.

Belongs to the bacterial ribosomal protein bL27 family.

In Colwellia psychrerythraea (strain 34H / ATCC BAA-681) (Vibrio psychroerythus), this protein is Large ribosomal subunit protein bL27.